The chain runs to 514 residues: 3-octaprenyl-4-hydroxybenzoate carboxy-lyase (514 aa).

Position 177 (asparagine 177) interacts with Mn(2+). Prenylated FMN-binding positions include 180 to 182 (IYR), 194 to 196 (RWL), and 199 to 200 (RG). Glutamate 243 lines the Mn(2+) pocket. The active-site Proton donor is the aspartate 314.

This sequence belongs to the UbiD family. In terms of assembly, homohexamer. The cofactor is prenylated FMN. Requires Mn(2+) as cofactor.

It localises to the cell membrane. It carries out the reaction a 4-hydroxy-3-(all-trans-polyprenyl)benzoate + H(+) = a 2-(all-trans-polyprenyl)phenol + CO2. It participates in cofactor biosynthesis; ubiquinone biosynthesis. Its function is as follows. Catalyzes the decarboxylation of 3-octaprenyl-4-hydroxy benzoate to 2-octaprenylphenol, an intermediate step in ubiquinone biosynthesis. The sequence is that of 3-octaprenyl-4-hydroxybenzoate carboxy-lyase from Bordetella pertussis (strain Tohama I / ATCC BAA-589 / NCTC 13251).